The primary structure comprises 127 residues: Glycine cleavage system H protein (127 aa).

The 82-residue stretch at 24-105 folds into the Lipoyl-binding domain; sequence TALAGITDFA…YGEGWLVKIK (82 aa). Residue Lys-65 is modified to N6-lipoyllysine.

The protein belongs to the GcvH family. As to quaternary structure, the glycine cleavage system is composed of four proteins: P, T, L and H. (R)-lipoate is required as a cofactor.

Its function is as follows. The glycine cleavage system catalyzes the degradation of glycine. The H protein shuttles the methylamine group of glycine from the P protein to the T protein. This chain is Glycine cleavage system H protein, found in Chlorobium phaeobacteroides (strain DSM 266 / SMG 266 / 2430).